The following is a 143-amino-acid chain: Ribosome maturation factor RimP (143 aa).

The protein belongs to the RimP family.

The protein localises to the cytoplasm. Its function is as follows. Required for maturation of 30S ribosomal subunits. This chain is Ribosome maturation factor RimP, found in Neisseria meningitidis serogroup C (strain 053442).